The following is a 235-amino-acid chain: Heme oxygenase (235 aa).

His19 is a binding site for heme b.

The protein belongs to the heme oxygenase family.

The protein resides in the plastid. The protein localises to the chloroplast. The catalysed reaction is heme b + 3 reduced [NADPH--hemoprotein reductase] + 3 O2 = biliverdin IXalpha + CO + Fe(2+) + 3 oxidized [NADPH--hemoprotein reductase] + 3 H2O + H(+). Catalyzes the opening of the heme ring with the release of iron. Key enzyme in the synthesis of the chromophoric part of the photosynthetic antennae. The chain is Heme oxygenase (pbsA) from Rhodella violacea (Red alga).